A 204-amino-acid polypeptide reads, in one-letter code: Ribonuclease HII (204 aa).

Residues 14 to 204 (QYICGVDEVG…SFKLSCLGEK (191 aa)) enclose the RNase H type-2 domain. Aspartate 20, glutamate 21, and aspartate 116 together coordinate a divalent metal cation.

Belongs to the RNase HII family. Requires Mn(2+) as cofactor. It depends on Mg(2+) as a cofactor.

It localises to the cytoplasm. The catalysed reaction is Endonucleolytic cleavage to 5'-phosphomonoester.. Endonuclease that specifically degrades the RNA of RNA-DNA hybrids. The sequence is that of Ribonuclease HII from Chloroherpeton thalassium (strain ATCC 35110 / GB-78).